We begin with the raw amino-acid sequence, 188 residues long: Ribosomal RNA small subunit methyltransferase G (188 aa).

Residues glycine 69, phenylalanine 74, 119-120 (VQ), and arginine 134 contribute to the S-adenosyl-L-methionine site.

Belongs to the methyltransferase superfamily. RNA methyltransferase RsmG family.

It is found in the cytoplasm. The enzyme catalyses guanosine(527) in 16S rRNA + S-adenosyl-L-methionine = N(7)-methylguanosine(527) in 16S rRNA + S-adenosyl-L-homocysteine. In terms of biological role, specifically methylates the N7 position of guanine in position 527 of 16S rRNA. The chain is Ribosomal RNA small subunit methyltransferase G from Campylobacter jejuni subsp. jejuni serotype O:2 (strain ATCC 700819 / NCTC 11168).